A 442-amino-acid chain; its full sequence is Putative arsenical pump membrane protein (442 aa).

A run of 11 helical transmembrane segments spans residues 22–42 (IPAT…LADL), 56–76 (ILAT…YWVA), 85–105 (GSGI…TIFL), 107–127 (NDGS…YLGL), 136–156 (LLSG…SNIV), 174–194 (MMFV…FMFF), 250–270 (LFAA…GSFI), 294–314 (IFIF…IGFT), 328–347 (SLAH…SNLF), 378–398 (IIGS…TLIW), and 419–439 (IIII…WISW).

It belongs to the ArsB family.

The protein localises to the cell membrane. The polypeptide is Putative arsenical pump membrane protein (ywrK) (Bacillus subtilis (strain 168)).